Here is a 169-residue protein sequence, read N- to C-terminus: Putative phosphoesterase SH1944 (169 aa).

His34 serves as the catalytic Proton donor. 2 consecutive short sequence motifs (HXTX) follow at residues 34–37 (HITI) and 115–118 (HFTI). Catalysis depends on His115, which acts as the Proton acceptor.

The protein belongs to the 2H phosphoesterase superfamily. YjcG family.

This is Putative phosphoesterase SH1944 from Staphylococcus haemolyticus (strain JCSC1435).